We begin with the raw amino-acid sequence, 567 residues long: Dihydroxy-acid dehydratase (567 aa).

C57 provides a ligand contact to [2Fe-2S] cluster. D89 is a binding site for Mg(2+). C130 provides a ligand contact to [2Fe-2S] cluster. Mg(2+) contacts are provided by D131 and K132. K132 carries the N6-carboxylysine modification. C202 provides a ligand contact to [2Fe-2S] cluster. E453 is a binding site for Mg(2+). Catalysis depends on S479, which acts as the Proton acceptor.

The protein belongs to the IlvD/Edd family. Homodimer. [2Fe-2S] cluster serves as cofactor. Requires Mg(2+) as cofactor.

The catalysed reaction is (2R)-2,3-dihydroxy-3-methylbutanoate = 3-methyl-2-oxobutanoate + H2O. The enzyme catalyses (2R,3R)-2,3-dihydroxy-3-methylpentanoate = (S)-3-methyl-2-oxopentanoate + H2O. Its pathway is amino-acid biosynthesis; L-isoleucine biosynthesis; L-isoleucine from 2-oxobutanoate: step 3/4. The protein operates within amino-acid biosynthesis; L-valine biosynthesis; L-valine from pyruvate: step 3/4. Functions in the biosynthesis of branched-chain amino acids. Catalyzes the dehydration of (2R,3R)-2,3-dihydroxy-3-methylpentanoate (2,3-dihydroxy-3-methylvalerate) into 2-oxo-3-methylpentanoate (2-oxo-3-methylvalerate) and of (2R)-2,3-dihydroxy-3-methylbutanoate (2,3-dihydroxyisovalerate) into 2-oxo-3-methylbutanoate (2-oxoisovalerate), the penultimate precursor to L-isoleucine and L-valine, respectively. The sequence is that of Dihydroxy-acid dehydratase from Nocardioides sp. (strain ATCC BAA-499 / JS614).